The following is a 6874-amino-acid chain: Nesprin-2 (6874 aa).

Residues 1 to 286 are actin-binding; that stretch reads MAASPVLPTE…MTYVAQFLKY (286 aa). At 1–6823 the chain is on the cytoplasmic side; sequence MAASPVLPTE…RRSFLSRVIR (6823 aa). Calponin-homology (CH) domains are found at residues 31–136 and 183–288; these read DTQK…LHFH and WSAK…KYSK. Spectrin repeat units lie at residues 299 to 380, 381 to 474, 475 to 577, and 578 to 680; these read AKVR…HQVA, AWRA…RINN, VLGK…QYIH, and NTKA…IQDQ. The stretch at 299-6767 forms a coiled coil; that stretch reads AKVRDALVWL…PDASLTSFDE (6469 aa). The interval 675–723 is disordered; the sequence is VKIQDQPPGNSSGTSLSKESAMAAEPGGSRGEDVKAAEKQEVEDEESAG. The segment covering 681–692 has biased composition (polar residues); sequence PPGNSSGTSLSK. The span at 704-714 shows a compositional bias: basic and acidic residues; sequence RGEDVKAAEKQ. Spectrin repeat units follow at residues 727–834, 835–928, 929–1030, 1120–1211, 1262–1322, 1323–1409, 1410–1514, 1515–1626, 1627–1728, 1729–1820, 1821–1928, 1929–2026, 2027–2122, 2123–2233, 2234–2350, 2422–2503, 2504–2610, 2611–2707, 2708–2821, 2822–2923, 2924–3027, 3028–3133, 3134–3239, 3240–3343, 3344–3456, 3457–3563, 3564–3669, 3670–3767, 3768–3870, 3871–3976, and 3977–4074; these read VNEE…KNLS, DEPL…LRHE, ISLY…KCAS, TQRG…LLNT, DIRD…DALD, ALEG…QSKE, EGPP…ASVT, ESLE…KTEE, YGEN…AGGS, NSYA…TKKN, ALQD…AGEL, NNSF…EEED, KLPA…LANT, YLSH…SVQK, LEGH…LNSI, DERE…TLKK, TKER…KCFQ, QATE…EALE, PLNR…QLEL, KLEE…FLQN, NGSE…GKIK, QLDT…NMLL, ELQP…SLRA, DVLN…AQEA, EEER…QWGG, ELKR…TTRK, NKDL…SSEV, SKSS…ESRT, SQLN…QIME, ALPH…VTQE, and QNEL…KPSA. The interval 2338–2397 is disordered; the sequence is SAKQETENGLNSILKSKSSTEKHVKFSLPVEEMPATSEVPKPTRESAAVGESGGARETNT. Residues 2344 to 2354 are compositionally biased toward polar residues; that stretch reads ENGLNSILKSK. Disordered stretches follow at residues 4062–4152, 4171–4193, 4326–4348, and 4401–4429; these read KQEQ…ATIV, APDS…TDEG, FSED…DQPA, and HQEN…DSTL. The span at 4081-4091 shows a compositional bias: basic and acidic residues; it reads VAERDASERKL. Position 4096 is a phosphoserine (S4096). Residues 4110-4122 show a composition bias toward basic and acidic residues; that stretch reads SSVKSEDGRRRTE. The Spectrin 36 repeat unit spans residues 4218 to 4337; it reads RSRPRPADIL…EDQHPSTLKK (120 aa). A compositionally biased stretch (basic and acidic residues) spans 4326 to 4345; it reads FSEDQHPSTLKKPSEPHDVD. Positions 4409 to 4429 are enriched in polar residues; that stretch reads RQSASSSKVPSPGNAASDSTL. 17 Spectrin repeats span residues 4507-4626, 4627-4714, 4715-4823, 4824-4929, 4930-5037, 5038-5150, 5151-5252, 5253-5377, 5378-5473, 5474-5576, 5577-5691, 5692-5786, 5787-5894, 5895-6004, 6005-6122, 6123-6230, and 6231-6342; these read SMTE…RSYQ, NEVK…RARY, LELS…QSML, QKWE…QTLL, KHLL…QEKL, HQLQ…KIQH, LEQL…SQVH, QLRA…KAPH, NAHA…MLLA, KSNE…YSEL, QGNG…QWRF, FTTS…LSLG, EVIS…RVAI, RKQE…VKKL, KETF…EETW, RLWQ…LRYF, and TNQR…PGLD. Residues 5435 to 5459 form a disordered region; the sequence is NSTLSDQLPQPEERSTPGLHSGQRH. Phosphoserine is present on S5772. The interval 6336 to 6473 is disordered; the sequence is SHTPGLDDEK…TEAPVPTDAS (138 aa). Over residues 6341–6354 the composition is skewed to acidic residues; it reads LDDEKEASENETDI. Residues S6348, S6371, S6400, S6417, S6418, S6419, and S6448 each carry the phosphoserine modification. A compositionally biased stretch (basic and acidic residues) spans 6355–6372; that stretch reads EDPREIQADSWRKRRESE. Spectrin repeat units follow at residues 6450 to 6534, 6535 to 6650, and 6651 to 6767; these read SHSK…KLRL, KQTV…QCQD, and FHQL…SFDE. Residues 6790–6812 are disordered; sequence EEEEEEEETDSRMPHLDSPGSSQ. The region spanning 6815 to 6874 is the KASH domain; that stretch reads RSFLSRVIRAALPLQLLLLLLLLLACLLPASEDDYSCTQANNFARSFYPMLRYTNGPPPT. A helical; Anchor for type IV membrane protein transmembrane segment spans residues 6824-6844; the sequence is AALPLQLLLLLLLLLACLLPA. At 6845-6874 the chain is on the perinuclear space side; sequence SEDDYSCTQANNFARSFYPMLRYTNGPPPT. The tract at residues 6861–6874 is sufficient for interaction with SUN2; it reads FYPMLRYTNGPPPT.

It belongs to the nesprin family. In terms of assembly, core component of LINC complexes which are composed of inner nuclear membrane SUN domain-containing proteins coupled to outer nuclear membrane KASH domain-containing nesprins. SUN and KASH domain-containing proteins seem to bind each other promiscuously; however, some LINC complex constituents are tissue- or cell type-specific. At least SUN1/2-containing core LINC complexes are proposed to be hexameric composed of three protomers of each KASH and SUN domain-containing protein. The SUN2:SYNE2/KASH2 complex is a heterohexamer; the homotrimeric cloverleave-like conformation of the SUN domain is a prerequisite for LINC complex formation in which three separate SYNE2/KASH2 peptides bind at the interface of adjacent SUN domains. Interacts with EMD, LMNA, MKS3 and F-actin via its N-terminal domain. Interacts with DCTN1 and DYNC1I1/2; suggesting the association with the dynein-dynactin motor complex. Associates with kinesin motor complexes. Interacts with TMEM67. Interacts (via KASH domain) with TMEM258. Interacts with BROX; this interaction promotes SYN2 ubiquitination and facilitates the relaxation of mechanical stress imposed by compressive actin fibers at the rupture site. In terms of processing, the disulfid bond with SUN2 is required for stability of the SUN2:SYNE2/KASH2 LINC complex under tensile forces though not required for the interaction. C-terminal isoforms are highly expressed in the brain, hert and skeletal muscle. Isoform 1 (Nesprin-2 Giant) is most prevalent in the brain, skin, kidney and skeletal muscle.

The protein localises to the nucleus outer membrane. It is found in the sarcoplasmic reticulum membrane. Its subcellular location is the cell membrane. It localises to the cytoplasm. The protein resides in the cytoskeleton. The protein localises to the mitochondrion. It is found in the nucleus. Its subcellular location is the nucleoplasm. Its function is as follows. Multi-isomeric modular protein which forms a linking network between organelles and the actin cytoskeleton to maintain the subcellular spatial organization. As a component of the LINC (LInker of Nucleoskeleton and Cytoskeleton) complex involved in the connection between the nuclear lamina and the cytoskeleton. The nucleocytoplasmic interactions established by the LINC complex play an important role in the transmission of mechanical forces across the nuclear envelope and in nuclear movement and positioning. Specifically, SYNE2 and SUN2 assemble in arrays of transmembrane actin-associated nuclear (TAN) lines which are bound to F-actin cables and couple the nucleus to retrograde actin flow during actin-dependent nuclear movement. May be involved in nucleus-centrosome attachment. During interkinetic nuclear migration (INM) at G2 phase and nuclear migration in neural progenitors its LINC complex association with SUN1/2 and probable association with cytoplasmic dynein-dynactin motor complexes functions to pull the nucleus toward the centrosome; SYNE1 and SYNE2 seem to act redundantly in cerebellum, midbrain, brain stem, and other brain regions except cerebral cortex and hippocampus. During INM at G1 phase mediates respective LINC complex association with kinesin to push the nucleus away from the centrosome. Involved in nuclear migration in retinal photoreceptor progenitors. Required for centrosome migration to the apical cell surface during early ciliogenesis. In Mus musculus (Mouse), this protein is Nesprin-2.